The chain runs to 303 residues: ASC1-like protein (303 aa).

The next 6 helical transmembrane spans lie at 19-39 (YEDFAVLPLFALFFPSVRFLL), 81-101 (CIYFLSAEVFALVVTYNEPWF), 127-147 (ALYMYTGGFYTYSIFALIFWE), 153-173 (FGVSMSHHVATAILIVLSYNI), 212-232 (YLCLSWIILRLIYYPFWVLWS), and 255-275 (YIFNSLLFCLLVLHIYWWVLI). In terms of domain architecture, TLC spans 72–284 (RKFKESAWKC…IYRMLVKQIQ (213 aa)).

The protein resides in the endoplasmic reticulum membrane. Its function is as follows. Mediates resistance to sphinganine-analog mycotoxins (SAMs) by restoring the sphingolipid biosynthesis. Could salvage the transport of GPI-anchored proteins from the endoplasmic reticulum to the Golgi apparatus in ceramides-depleted cells after SAM exposure. The chain is ASC1-like protein from Solanum lycopersicum (Tomato).